The following is a 257-amino-acid chain: Zinc import ATP-binding protein ZnuC (257 aa).

One can recognise an ABC transporter domain in the interval 6–221 (IRLDQVGVTF…PAFVELFGKT (216 aa)). Residue 38 to 45 (GPNGAGKT) participates in ATP binding.

The protein belongs to the ABC transporter superfamily. Zinc importer (TC 3.A.1.15.5) family. The complex is composed of two ATP-binding proteins (ZnuC), two transmembrane proteins (ZnuB) and a solute-binding protein (ZnuA).

It localises to the cell inner membrane. The enzyme catalyses Zn(2+)(out) + ATP(in) + H2O(in) = Zn(2+)(in) + ADP(in) + phosphate(in) + H(+)(in). Its function is as follows. Part of the ABC transporter complex ZnuABC involved in zinc import. Responsible for energy coupling to the transport system. This chain is Zinc import ATP-binding protein ZnuC, found in Pseudomonas putida (strain ATCC 47054 / DSM 6125 / CFBP 8728 / NCIMB 11950 / KT2440).